The sequence spans 299 residues: Probable lipid kinase YegS (299 aa).

The 132-residue stretch at 2-133 (AEFPASLLIL…IDMAQVNKQT (132 aa)) folds into the DAGKc domain. Residues threonine 40, 66–72 (GDGTINE), and threonine 95 contribute to the ATP site. Positions 215, 218, and 220 each coordinate Mg(2+). The Proton acceptor role is filled by glutamate 271.

Belongs to the diacylglycerol/lipid kinase family. YegS lipid kinase subfamily. Mg(2+) serves as cofactor. It depends on Ca(2+) as a cofactor.

It localises to the cytoplasm. In terms of biological role, probably phosphorylates lipids; the in vivo substrate is unknown. The polypeptide is Probable lipid kinase YegS (Escherichia coli O9:H4 (strain HS)).